A 389-amino-acid polypeptide reads, in one-letter code: Succinate--CoA ligase [ADP-forming] subunit beta (389 aa).

In terms of domain architecture, ATP-grasp spans 9–244; sequence KQLLAEYGIP…KTQEDETEVT (236 aa). ATP contacts are provided by residues Lys46, 53-55, Gly102, and Glu107; that span reads GRG. Residues Asn199 and Asp213 each contribute to the Mg(2+) site. Substrate contacts are provided by residues Asn264 and 321–323; that span reads GIV.

It belongs to the succinate/malate CoA ligase beta subunit family. As to quaternary structure, heterotetramer of two alpha and two beta subunits. Mg(2+) serves as cofactor.

The enzyme catalyses succinate + ATP + CoA = succinyl-CoA + ADP + phosphate. The catalysed reaction is GTP + succinate + CoA = succinyl-CoA + GDP + phosphate. It participates in carbohydrate metabolism; tricarboxylic acid cycle; succinate from succinyl-CoA (ligase route): step 1/1. Its function is as follows. Succinyl-CoA synthetase functions in the citric acid cycle (TCA), coupling the hydrolysis of succinyl-CoA to the synthesis of either ATP or GTP and thus represents the only step of substrate-level phosphorylation in the TCA. The beta subunit provides nucleotide specificity of the enzyme and binds the substrate succinate, while the binding sites for coenzyme A and phosphate are found in the alpha subunit. The chain is Succinate--CoA ligase [ADP-forming] subunit beta from Xanthomonas euvesicatoria pv. vesicatoria (strain 85-10) (Xanthomonas campestris pv. vesicatoria).